The following is a 307-amino-acid chain: 4-hydroxybenzoate octaprenyltransferase (307 aa).

Transmembrane regions (helical) follow at residues 19–39 (PVGI…AAMG), 48–68 (VTAG…AILM), 105–125 (AIAA…FLPI), 127–147 (VFYW…MKRY), 150–170 (LPQV…YVAI), 172–192 (GAAD…TVAY), 221–241 (VIII…VMWH), 243–263 (FVPT…AMMF), and 282–302 (FLAN…ACVW).

It belongs to the UbiA prenyltransferase family. Requires Mg(2+) as cofactor.

The protein localises to the cell inner membrane. The catalysed reaction is all-trans-octaprenyl diphosphate + 4-hydroxybenzoate = 4-hydroxy-3-(all-trans-octaprenyl)benzoate + diphosphate. It functions in the pathway cofactor biosynthesis; ubiquinone biosynthesis. Its function is as follows. Catalyzes the prenylation of para-hydroxybenzoate (PHB) with an all-trans polyprenyl group. Mediates the second step in the final reaction sequence of ubiquinone-8 (UQ-8) biosynthesis, which is the condensation of the polyisoprenoid side chain with PHB, generating the first membrane-bound Q intermediate 3-octaprenyl-4-hydroxybenzoate. The sequence is that of 4-hydroxybenzoate octaprenyltransferase from Psychrobacter arcticus (strain DSM 17307 / VKM B-2377 / 273-4).